A 514-amino-acid chain; its full sequence is Lysine--tRNA ligase (514 aa).

A compositionally biased stretch (low complexity) spans 1-13 (MSKPNNQNQQNNQ). The interval 1 to 21 (MSKPNNQNQQNNQEPAPEDAN) is disordered. Glu-422 and Glu-429 together coordinate Mg(2+).

The protein belongs to the class-II aminoacyl-tRNA synthetase family. As to quaternary structure, homodimer. Mg(2+) is required as a cofactor.

It is found in the cytoplasm. The enzyme catalyses tRNA(Lys) + L-lysine + ATP = L-lysyl-tRNA(Lys) + AMP + diphosphate. The polypeptide is Lysine--tRNA ligase (Psychrobacter cryohalolentis (strain ATCC BAA-1226 / DSM 17306 / VKM B-2378 / K5)).